The chain runs to 585 residues: Arginine--tRNA ligase (585 aa).

The short motif at 131 to 141 is the 'HIGH' region element; sequence ANPTGPMHVGH.

This sequence belongs to the class-I aminoacyl-tRNA synthetase family. Monomer.

The protein resides in the cytoplasm. It catalyses the reaction tRNA(Arg) + L-arginine + ATP = L-arginyl-tRNA(Arg) + AMP + diphosphate. This Brucella ovis (strain ATCC 25840 / 63/290 / NCTC 10512) protein is Arginine--tRNA ligase.